The primary structure comprises 188 residues: Elongation factor P-like protein (188 aa).

Belongs to the elongation factor P family.

The sequence is that of Elongation factor P-like protein from Xanthomonas axonopodis pv. citri (strain 306).